Here is a 168-residue protein sequence, read N- to C-terminus: uncharacterized protein (168 aa).

Residues Met1–Ser15 show a composition bias toward low complexity. Residues Met1–Asn107 form a disordered region. Positions Ser33–Ser47 are enriched in acidic residues. The segment covering Asp48–Asn107 has biased composition (low complexity).

This is an uncharacterized protein from Dictyostelium discoideum (Social amoeba).